Reading from the N-terminus, the 306-residue chain is Homoserine O-succinyltransferase (306 aa).

C142 acts as the Acyl-thioester intermediate in catalysis. Substrate-binding residues include K163 and S192. H233 (proton acceptor) is an active-site residue. E235 is a catalytic residue. Residue R247 coordinates substrate.

The protein belongs to the MetA family.

Its subcellular location is the cytoplasm. It catalyses the reaction L-homoserine + succinyl-CoA = O-succinyl-L-homoserine + CoA. The protein operates within amino-acid biosynthesis; L-methionine biosynthesis via de novo pathway; O-succinyl-L-homoserine from L-homoserine: step 1/1. In terms of biological role, transfers a succinyl group from succinyl-CoA to L-homoserine, forming succinyl-L-homoserine. In Pelagibacterium halotolerans (strain DSM 22347 / JCM 15775 / CGMCC 1.7692 / B2), this protein is Homoserine O-succinyltransferase.